A 161-amino-acid polypeptide reads, in one-letter code: Ubiquitin-conjugating enzyme 15 (161 aa).

Residues 15–161 (IACNRLQKEL…TRWWFHDDKV (147 aa)) enclose the UBC core domain. The Glycyl thioester intermediate role is filled by Cys99.

Belongs to the ubiquitin-conjugating enzyme family.

The catalysed reaction is S-ubiquitinyl-[E1 ubiquitin-activating enzyme]-L-cysteine + [E2 ubiquitin-conjugating enzyme]-L-cysteine = [E1 ubiquitin-activating enzyme]-L-cysteine + S-ubiquitinyl-[E2 ubiquitin-conjugating enzyme]-L-cysteine.. It functions in the pathway protein modification; protein ubiquitination. Functionally, accepts the ubiquitin from the E1 complex and catalyzes its covalent attachment to other proteins. This chain is Ubiquitin-conjugating enzyme 15 (UBC15), found in Arabidopsis thaliana (Mouse-ear cress).